We begin with the raw amino-acid sequence, 133 residues long: Ribosome-binding factor A (133 aa).

The protein belongs to the RbfA family. As to quaternary structure, monomer. Binds 30S ribosomal subunits, but not 50S ribosomal subunits or 70S ribosomes.

The protein resides in the cytoplasm. One of several proteins that assist in the late maturation steps of the functional core of the 30S ribosomal subunit. Associates with free 30S ribosomal subunits (but not with 30S subunits that are part of 70S ribosomes or polysomes). Required for efficient processing of 16S rRNA. May interact with the 5'-terminal helix region of 16S rRNA. This chain is Ribosome-binding factor A, found in Salmonella typhi.